The primary structure comprises 252 residues: Neurexophilin-3 (252 aa).

Positions 1 to 22 (MQLTRCCFVFLVQGSLYLVICG) are cleaved as a signal peptide. The II stretch occupies residues 23-75 (QDDGPPGSEDPERDDHEGQPRPRVPRKRGHISPKSRPMANSTLLGLLAPPGEA). The segment at 27-58 (PPGSEDPERDDHEGQPRPRVPRKRGHISPKSR) is disordered. Residues 45–55 (RVPRKRGHISP) show a composition bias toward basic residues. N62, N127, N137, and N143 each carry an N-linked (GlcNAc...) asparagine glycan. The segment at 76 to 157 (WGILGQPPNR…LVPPSKAVEF (82 aa)) is III. The IV (linker domain) stretch occupies residues 158-166 (HQEQQIFIE). Residues 167 to 252 (AKASKIFNCR…HSDTPYYPSG (86 aa)) form a v (Cys-rich) region.

Belongs to the neurexophilin family. In terms of processing, may be proteolytically processed at the boundary between the N-terminal non-conserved and the central conserved domain in neuron-like cells. In terms of tissue distribution, highest level in brain.

The protein resides in the secreted. May be signaling molecules that resemble neuropeptides. Ligand for alpha-neurexins. The protein is Neurexophilin-3 (NXPH3) of Homo sapiens (Human).